Consider the following 529-residue polypeptide: Neuronal acetylcholine receptor subunit alpha-2 (529 aa).

The signal sequence occupies residues 1 to 26 (MGPSCPVFLSFTKLSLWWLLLTPAGG). Residues 27 to 56 (EEAKRPPPRAPGDPLSSPSPTALPQGGSHT) are disordered. At 27–264 (EEAKRPPPRA…VTYAFIIRRL (238 aa)) the chain is on the extracellular side. N-linked (GlcNAc...) asparagine glycans are attached at residues Asn-79 and Asn-129. Cys-183 and Cys-197 form a disulfide bridge. Asn-235 carries N-linked (GlcNAc...) asparagine glycosylation. Residues Cys-247 and Cys-248 are joined by a disulfide bond. 3 consecutive transmembrane segments (helical) span residues 265-289 (PLFYTINLIIPCLLISCLTVLVFYL), 297-315 (ITLCISVLLSLTVFLLLIT), and 331-352 (YLLFTMIFVTLSIVITVFVLNV). The Cytoplasmic portion of the chain corresponds to 353–502 (HHRSPSTHTM…WKYVAMVIDR (150 aa)). Residues 503 to 521 (IFLWLFIIVCFLGTIGLFL) traverse the membrane as a helical segment.

This sequence belongs to the ligand-gated ion channel (TC 1.A.9) family. Acetylcholine receptor (TC 1.A.9.1) subfamily. Alpha-2/CHRNA2 sub-subfamily. In terms of assembly, neuronal AChR is composed of two different types of subunits: alpha and non-alpha (beta). CHRNA2/alpha-2 subunit can be combined to CHRNB2/beta-2 or CHRNB4/beta-4 to give rise to functional receptors. Both CHRNA2:CHRNB2 and CHRNA2:CHRNB4 nAChR complexes are heteropentamers with two subtypes: LS (low agonist sensitivity) with a (CHRNA2)3:(CHRNB2/4)2 and HS (high agonist sensitivity) with a (CHRNA2)2:(CHRNB2/4)3 stoichiometries; the subtypes differ in their subunit binding interfaces which are involved in ligand binding.

It is found in the synaptic cell membrane. Its subcellular location is the cell membrane. It catalyses the reaction Ca(2+)(in) = Ca(2+)(out). The catalysed reaction is K(+)(in) = K(+)(out). It carries out the reaction Na(+)(in) = Na(+)(out). In terms of biological role, component of neuronal acetylcholine receptors (nAChRs) that function as pentameric, ligand-gated cation channels with high calcium permeability among other activities. nAChRs are excitatory neurotrasnmitter receptors formed by a collection of nAChR subunits known to mediate synaptic transmission in the nervous system and the neuromuscular junction. Each nAchR subunit confers differential attributes to channel properties, including activation, deactivation and desensitization kinetics, pH sensitivity, cation permeability, and binding to allosteric modulators. CHRNA2 forms heteropentameric neuronal acetylcholine receptors with CHRNB2 and CHRNB4 and plays a role in nicotine dependence. The sequence is that of Neuronal acetylcholine receptor subunit alpha-2 (CHRNA2) from Pan troglodytes (Chimpanzee).